The sequence spans 170 residues: 3-hydroxyacyl-[acyl-carrier-protein] dehydratase FabZ (170 aa).

H66 is an active-site residue.

This sequence belongs to the thioester dehydratase family. FabZ subfamily.

The protein resides in the cytoplasm. The catalysed reaction is a (3R)-hydroxyacyl-[ACP] = a (2E)-enoyl-[ACP] + H2O. Involved in unsaturated fatty acids biosynthesis. Catalyzes the dehydration of short chain beta-hydroxyacyl-ACPs and long chain saturated and unsaturated beta-hydroxyacyl-ACPs. In Granulibacter bethesdensis (strain ATCC BAA-1260 / CGDNIH1), this protein is 3-hydroxyacyl-[acyl-carrier-protein] dehydratase FabZ.